Here is a 375-residue protein sequence, read N- to C-terminus: Glutamate 5-kinase (375 aa).

Lys17 is a binding site for ATP. Residues Ser57, Asp144, and Asn156 each coordinate substrate. Residue 176-177 (TD) coordinates ATP. The 79-residue stretch at 283–361 (KGRLWLDTGA…HQIEQILGYV (79 aa)) folds into the PUA domain.

Belongs to the glutamate 5-kinase family.

It localises to the cytoplasm. The catalysed reaction is L-glutamate + ATP = L-glutamyl 5-phosphate + ADP. It functions in the pathway amino-acid biosynthesis; L-proline biosynthesis; L-glutamate 5-semialdehyde from L-glutamate: step 1/2. Its function is as follows. Catalyzes the transfer of a phosphate group to glutamate to form L-glutamate 5-phosphate. The sequence is that of Glutamate 5-kinase from Nitrosococcus oceani (strain ATCC 19707 / BCRC 17464 / JCM 30415 / NCIMB 11848 / C-107).